We begin with the raw amino-acid sequence, 1192 residues long: DNA ligase 1 (1192 aa).

Disordered stretches follow at residues 29–257 (ELNK…KEKE) and 280–517 (EKEL…KSTQ). A compositionally biased stretch (basic and acidic residues) spans 42–56 (EAVVKEKVEKKEKKE). Positions 70 to 113 (EEEEEEQEEQDGEEEQEEEEEYQQQDEEIEEDINGEEEMELDEN) are enriched in acidic residues. Basic and acidic residues predominate over residues 141–155 (KTIENKETKKPEKQS). Positions 172 to 198 (DDEEDEEDENKTDDNDLDDMLDDDSDN) are enriched in acidic residues. Basic and acidic residues-rich tracts occupy residues 199–257 (EKDS…KEKE) and 280–368 (EKEL…RANA). 2 stretches are compositionally biased toward low complexity: residues 371–382 (KSSVPTSTSKNS) and 410–434 (STTT…ISSP). The span at 435-467 (SKKEEKEVITSKKQVEATKVEVKKEKEKEKEKE) shows a compositional bias: basic and acidic residues. Residues 468-511 (KEDDEEEEEEEEDDDEKLEDIDEEEYEEEEEEDEEGISENEEEE) show a composition bias toward acidic residues. An interaction with target DNA region spans residues 724 to 733 (KLRIGLAERS). Position 842 (E842) interacts with ATP. K844 functions as the N6-AMP-lysine intermediate in the catalytic mechanism. Residues R849 and R865 each coordinate ATP. Residue E897 coordinates Mg(2+). The tract at residues 918–920 (ARK) is interaction with target DNA. E996 is a Mg(2+) binding site. Positions 1001, 1014, and 1020 each coordinate ATP. The tract at residues 1157–1192 (DKSPEDATSSDQVVDMYQNQKINSQSSKINEKDEDY) is disordered. Residues 1162-1184 (DATSSDQVVDMYQNQKINSQSSK) are compositionally biased toward polar residues.

This sequence belongs to the ATP-dependent DNA ligase family. The cofactor is Mg(2+).

Its subcellular location is the nucleus. The catalysed reaction is ATP + (deoxyribonucleotide)n-3'-hydroxyl + 5'-phospho-(deoxyribonucleotide)m = (deoxyribonucleotide)n+m + AMP + diphosphate.. Its function is as follows. DNA ligase that seals nicks in double-stranded DNA during DNA replication, DNA recombination and DNA repair. In Dictyostelium discoideum (Social amoeba), this protein is DNA ligase 1 (lig1).